The following is a 183-amino-acid chain: Peptide deformylase (183 aa).

2 residues coordinate Fe cation: Cys110 and His153. Residue Glu154 is part of the active site. His157 is a binding site for Fe cation.

The protein belongs to the polypeptide deformylase family. Requires Fe(2+) as cofactor.

It carries out the reaction N-terminal N-formyl-L-methionyl-[peptide] + H2O = N-terminal L-methionyl-[peptide] + formate. Its function is as follows. Removes the formyl group from the N-terminal Met of newly synthesized proteins. Requires at least a dipeptide for an efficient rate of reaction. N-terminal L-methionine is a prerequisite for activity but the enzyme has broad specificity at other positions. This chain is Peptide deformylase, found in Oceanobacillus iheyensis (strain DSM 14371 / CIP 107618 / JCM 11309 / KCTC 3954 / HTE831).